Reading from the N-terminus, the 355-residue chain is Epoxide hydrolase 2 (355 aa).

One can recognise an AB hydrolase-1 domain in the interval 78 to 323; sequence VLLMVHGFPE…IRGASHWVQQ (246 aa). The active-site Nucleophile is the D152. Y263 acts as the Proton donor in catalysis. H319 functions as the Proton acceptor in the catalytic mechanism.

It belongs to the AB hydrolase superfamily. Epoxide hydrolase family.

The catalysed reaction is an epoxide + H2O = an ethanediol. Its pathway is lipid metabolism. Its function is as follows. Catalyzes the hydrolysis of epoxide-containing fatty acids. Active in vitro against trans-1,3-diphenylpropene oxide (t-DPPO), epoxyeicosatrienoic acids (EETs) including 8,9-EET, 11,12-EET and 14,15-EET and the linoleic acid metabolites 12,13-epoxy-9-octadecenoate (12,13-EpOME) and 9,10-epoxy-12-octadecenoate (9,10-EpOME). In Caenorhabditis elegans, this protein is Epoxide hydrolase 2.